A 396-amino-acid chain; its full sequence is Elongation factor Tu (396 aa).

In terms of domain architecture, tr-type G spans 10–206 (KPHCNIGTIG…AVDAYIPQPE (197 aa)). The tract at residues 19 to 26 (GHVDHGKT) is G1. 19-26 (GHVDHGKT) is a binding site for GTP. Threonine 26 lines the Mg(2+) pocket. Residues 60–64 (GITIS) form a G2 region. The G3 stretch occupies residues 81–84 (DCPG). Residues 81–85 (DCPGH) and 136–139 (NKVD) each bind GTP. The G4 stretch occupies residues 136-139 (NKVD). The tract at residues 174–176 (SAL) is G5.

The protein belongs to the TRAFAC class translation factor GTPase superfamily. Classic translation factor GTPase family. EF-Tu/EF-1A subfamily. In terms of assembly, monomer.

The protein localises to the cytoplasm. The catalysed reaction is GTP + H2O = GDP + phosphate + H(+). GTP hydrolase that promotes the GTP-dependent binding of aminoacyl-tRNA to the A-site of ribosomes during protein biosynthesis. The polypeptide is Elongation factor Tu (Gluconacetobacter diazotrophicus (strain ATCC 49037 / DSM 5601 / CCUG 37298 / CIP 103539 / LMG 7603 / PAl5)).